The primary structure comprises 67 residues: Small ribosomal subunit protein eS31 (67 aa).

The Zn(2+) site is built by C31, C34, C49, and C52. The C4-type zinc-finger motif lies at 31 to 52 (CPKCGAGVFMAEHLNRFACGKC).

Belongs to the eukaryotic ribosomal protein eS31 family. As to quaternary structure, part of the 30S ribosomal subunit. Zn(2+) serves as cofactor.

This is Small ribosomal subunit protein eS31 from Methanococcus maripaludis (strain DSM 14266 / JCM 13030 / NBRC 101832 / S2 / LL).